Here is a 469-residue protein sequence, read N- to C-terminus: Adenosylhomocysteinase (469 aa).

Residues threonine 60, aspartate 135, and glutamate 195 each coordinate substrate. Residue 196 to 198 (TTT) participates in NAD(+) binding. Lysine 225 and aspartate 229 together coordinate substrate. Residues asparagine 230, 259-264 (GYGDVG), glutamate 282, asparagine 317, 338-340 (IGH), and asparagine 383 each bind NAD(+).

This sequence belongs to the adenosylhomocysteinase family. The cofactor is NAD(+).

It is found in the cytoplasm. It catalyses the reaction S-adenosyl-L-homocysteine + H2O = L-homocysteine + adenosine. Its pathway is amino-acid biosynthesis; L-homocysteine biosynthesis; L-homocysteine from S-adenosyl-L-homocysteine: step 1/1. May play a key role in the regulation of the intracellular concentration of adenosylhomocysteine. The protein is Adenosylhomocysteinase of Hyphomonas neptunium (strain ATCC 15444).